A 296-amino-acid polypeptide reads, in one-letter code: Homoserine kinase (296 aa).

84–94 lines the ATP pocket; that stretch reads PLARGLGSSSS.

This sequence belongs to the GHMP kinase family. Homoserine kinase subfamily.

It localises to the cytoplasm. The catalysed reaction is L-homoserine + ATP = O-phospho-L-homoserine + ADP + H(+). It participates in amino-acid biosynthesis; L-threonine biosynthesis; L-threonine from L-aspartate: step 4/5. In terms of biological role, catalyzes the ATP-dependent phosphorylation of L-homoserine to L-homoserine phosphate. This chain is Homoserine kinase (thrB), found in Lactococcus lactis subsp. cremoris (Streptococcus cremoris).